A 615-amino-acid polypeptide reads, in one-letter code: Dihydroxy-acid dehydratase (615 aa).

Asp81 is a Mg(2+) binding site. Cys122 lines the [2Fe-2S] cluster pocket. Residues Asp123 and Lys124 each coordinate Mg(2+). An N6-carboxylysine modification is found at Lys124. Residue Cys197 participates in [2Fe-2S] cluster binding. Glu494 lines the Mg(2+) pocket. Ser520 serves as the catalytic Proton acceptor.

It belongs to the IlvD/Edd family. Homodimer. [2Fe-2S] cluster is required as a cofactor. Mg(2+) serves as cofactor.

The catalysed reaction is (2R)-2,3-dihydroxy-3-methylbutanoate = 3-methyl-2-oxobutanoate + H2O. It carries out the reaction (2R,3R)-2,3-dihydroxy-3-methylpentanoate = (S)-3-methyl-2-oxopentanoate + H2O. It participates in amino-acid biosynthesis; L-isoleucine biosynthesis; L-isoleucine from 2-oxobutanoate: step 3/4. The protein operates within amino-acid biosynthesis; L-valine biosynthesis; L-valine from pyruvate: step 3/4. Functionally, functions in the biosynthesis of branched-chain amino acids. Catalyzes the dehydration of (2R,3R)-2,3-dihydroxy-3-methylpentanoate (2,3-dihydroxy-3-methylvalerate) into 2-oxo-3-methylpentanoate (2-oxo-3-methylvalerate) and of (2R)-2,3-dihydroxy-3-methylbutanoate (2,3-dihydroxyisovalerate) into 2-oxo-3-methylbutanoate (2-oxoisovalerate), the penultimate precursor to L-isoleucine and L-valine, respectively. In Salinispora arenicola (strain CNS-205), this protein is Dihydroxy-acid dehydratase.